The chain runs to 339 residues: Histidine protein methyltransferase 1 (339 aa).

Phosphoserine occurs at positions 333 and 338.

It belongs to the methyltransferase superfamily. METTL18 family.

Its subcellular location is the cytoplasm. It localises to the nucleus. The enzyme catalyses L-histidyl-[protein] + S-adenosyl-L-methionine = N(tele)-methyl-L-histidyl-[protein] + S-adenosyl-L-homocysteine + H(+). Functionally, protein-histidine N-methyltransferase that mediates methylation of target protein on His residues. This is Histidine protein methyltransferase 1 from Schizosaccharomyces pombe (strain 972 / ATCC 24843) (Fission yeast).